The chain runs to 1154 residues: Diacylglycerol kinase eta (1154 aa).

Residues 1–54 are disordered; it reads MAGAGYQHHPPGGAAVGTSAVSPTAAGPGEDSSDSEAEQGGPQKLIRKVSTSGQ. Positions 59-152 constitute a PH domain; sequence TSIKEGQLLK…WISSLKSVQS (94 aa). 2 Phorbol-ester/DAG-type zinc fingers span residues 169-219 and 241-292; these read MHNW…TNNC and PHQW…HPVC. In terms of domain architecture, DAGKc spans 322-457; it reads FCVSPLLVFV…LDRWSIMTYE (136 aa). Disordered regions lie at residues 560–608, 634–678, and 1123–1154; these read QASR…AVKP, DEQT…APEA, and FKMEKAQKQKTSSQPGPGDTESGSYEANSPGN. Residues 573–586 are compositionally biased toward acidic residues; that stretch reads PEEDAVESSSEESL. Positions 656–667 are enriched in basic and acidic residues; the sequence is DDSKDNDTKESP. Positions 1131–1154 are enriched in polar residues; it reads QKTSSQPGPGDTESGSYEANSPGN.

It belongs to the eukaryotic diacylglycerol kinase family. As to quaternary structure, interacts with RAF1 and BRAF. In terms of processing, phosphorylated. Phosphorylation does not inhibit catalytic activity. As to expression, expressed in a wide variety of tissues. Most abundant in the brain and testis; also found in lung, spleen, and prostate (at protein level).

The protein resides in the cytoplasm. It is found in the cell membrane. It catalyses the reaction a 1,2-diacyl-sn-glycerol + ATP = a 1,2-diacyl-sn-glycero-3-phosphate + ADP + H(+). The catalysed reaction is 1,2-di-(9Z-octadecenoyl)-sn-glycerol + ATP = 1,2-di-(9Z-octadecenoyl)-sn-glycero-3-phosphate + ADP + H(+). Its pathway is lipid metabolism; glycerolipid metabolism. Diacylglycerol kinase that converts diacylglycerol/DAG into phosphatidic acid/phosphatidate/PA and regulates the respective levels of these two bioactive lipids. Thereby, acts as a central switch between the signaling pathways activated by these second messengers with different cellular targets and opposite effects in numerous biological processes. Plays a key role in promoting cell growth. Activates the Ras/B-Raf/C-Raf/MEK/ERK signaling pathway induced by EGF. Regulates the recruitment of RAF1 and BRAF from cytoplasm to membranes and their heterodimerization. This is Diacylglycerol kinase eta (DGKH) from Mesocricetus auratus (Golden hamster).